The following is a 380-amino-acid chain: Glucose-1-phosphate adenylyltransferase (380 aa).

Alpha-D-glucose 1-phosphate is bound by residues G164, 179 to 180, and S190; that span reads EK.

The protein belongs to the bacterial/plant glucose-1-phosphate adenylyltransferase family. In terms of assembly, homotetramer.

It carries out the reaction alpha-D-glucose 1-phosphate + ATP + H(+) = ADP-alpha-D-glucose + diphosphate. It participates in glycan biosynthesis; glycogen biosynthesis. Functionally, involved in the biosynthesis of ADP-glucose, a building block required for the elongation reactions to produce glycogen. Catalyzes the reaction between ATP and alpha-D-glucose 1-phosphate (G1P) to produce pyrophosphate and ADP-Glc. The protein is Glucose-1-phosphate adenylyltransferase of Streptococcus sanguinis (strain SK36).